The chain runs to 341 residues: UDP-3-O-acylglucosamine N-acyltransferase (341 aa).

The Proton acceptor role is filled by H240.

This sequence belongs to the transferase hexapeptide repeat family. LpxD subfamily. Homotrimer.

It catalyses the reaction a UDP-3-O-[(3R)-3-hydroxyacyl]-alpha-D-glucosamine + a (3R)-hydroxyacyl-[ACP] = a UDP-2-N,3-O-bis[(3R)-3-hydroxyacyl]-alpha-D-glucosamine + holo-[ACP] + H(+). Its pathway is bacterial outer membrane biogenesis; LPS lipid A biosynthesis. Catalyzes the N-acylation of UDP-3-O-acylglucosamine using 3-hydroxyacyl-ACP as the acyl donor. Is involved in the biosynthesis of lipid A, a phosphorylated glycolipid that anchors the lipopolysaccharide to the outer membrane of the cell. In Cellvibrio japonicus (strain Ueda107) (Pseudomonas fluorescens subsp. cellulosa), this protein is UDP-3-O-acylglucosamine N-acyltransferase.